A 146-amino-acid polypeptide reads, in one-letter code: Hemoglobin subunit beta (146 aa).

Position 1 is an N-acetylvaline (V1). The Globin domain occupies 2-146 (HLTGEEKAAV…VANALAHKYH (145 aa)). T12 is modified (phosphothreonine). S44 carries the post-translational modification Phosphoserine. K59 carries the post-translational modification N6-acetyllysine. H63 lines the heme b pocket. K82 bears the N6-acetyllysine mark. Residue H92 participates in heme b binding. An S-nitrosocysteine modification is found at C93. An N6-acetyllysine modification is found at K144.

Belongs to the globin family. In terms of assembly, heterotetramer of two alpha chains and two beta chains. As to expression, red blood cells.

Functionally, involved in oxygen transport from the lung to the various peripheral tissues. In Lutra lutra (European river otter), this protein is Hemoglobin subunit beta (HBB).